The primary structure comprises 665 residues: Soluble lamin-associated protein of 75 kDa (665 aa).

Positions 309-665 are disordered; that stretch reads AFASTSEGPE…GPGKKKAKLT (357 aa). Polar residues predominate over residues 311-326; the sequence is ASTSEGPEKTPVSTRT. The span at 327–338 shows a compositional bias: basic residues; it reads RSSHLKRPKIGK. A phosphoserine mark is found at Ser-348 and Ser-377. Acidic residues predominate over residues 376 to 397; the sequence is SSEEFLEEEPEQGVIDFEDESG. The span at 412-421 shows a compositional bias: basic and acidic residues; sequence QKQDGDKDSA. Residues 440-451 are compositionally biased toward acidic residues; it reads TEDEDSTSEGLE. 2 positions are modified to phosphoserine: Ser-447 and Ser-512. Composition is skewed to polar residues over residues 521–533 and 553–566; these read LGSSDNVATVSNI and VSQNLSPNTTSSVE. Ser-610, Ser-613, and Ser-630 each carry phosphoserine. Over residues 646–665 the composition is skewed to basic residues; it reads NLRRKAKGHKGPGKKKAKLT.

Belongs to the FAM169 family.

The protein localises to the nucleus envelope. It is found in the nucleus inner membrane. In Mus musculus (Mouse), this protein is Soluble lamin-associated protein of 75 kDa (Fam169a).